An 86-amino-acid chain; its full sequence is Centromere protein W (86 aa).

It belongs to the CENP-W/WIP1 family. Heterodimer with CENPT; this dimer coassembles with CENPS-CENPX heterodimers at centromeres to form the tetrameric CENP-T-W-S-X complex, which is a subcomplex of the large constitutive centromere-associated network (CCAN, also known as the interphase centromere complex or ICEN). Interacts with NPM1.

Its subcellular location is the nucleus. It localises to the chromosome. The protein resides in the centromere. It is found in the kinetochore. The protein localises to the nucleus matrix. Its subcellular location is the nucleolus. Functionally, component of the CENPA-NAC (nucleosome-associated) complex, a complex that plays a central role in assembly of kinetochore proteins, mitotic progression and chromosome segregation. The CENPA-NAC complex recruits the CENPA-CAD (nucleosome distal) complex and may be involved in incorporation of newly synthesized CENPA into centromeres. Part of a nucleosome-associated complex that binds specifically to histone H3-containing nucleosomes at the centromere, as opposed to nucleosomes containing CENPA. Component of the heterotetrameric CENP-T-W-S-X complex that binds and supercoils DNA, and plays an important role in kinetochore assembly. CENPW has a fundamental role in kinetochore assembly and function. It is one of the inner kinetochore proteins, with most further proteins binding downstream. Required for normal chromosome organization and normal progress through mitosis. The polypeptide is Centromere protein W (Cenpw) (Mus musculus (Mouse)).